A 426-amino-acid chain; its full sequence is Putative acid phosphatase 1 (426 aa).

Residues 1–18 (MRVLFYVFPFVIFALSQA) form the signal peptide. Topologically, residues 19-388 (QLISVHVIFR…HNWTMTTVSW (370 aa)) are extracellular. Histidine 29 functions as the Nucleophile in the catalytic mechanism. 2 N-linked (GlcNAc...) asparagine glycosylation sites follow: asparagine 37 and asparagine 145. The cysteines at positions 133 and 369 are disulfide-linked. The active-site Proton donor is aspartate 276. A glycan (N-linked (GlcNAc...) asparagine) is linked at asparagine 380. The helical transmembrane segment at 389–409 (ILIGISAFLLIILIIMSYLAV) threads the bilayer. Topologically, residues 410–426 (RYKNRSVVTIKKVCLEN) are cytoplasmic.

The protein belongs to the histidine acid phosphatase family.

It is found in the membrane. The enzyme catalyses a phosphate monoester + H2O = an alcohol + phosphate. The sequence is that of Putative acid phosphatase 1 from Caenorhabditis briggsae.